The following is a 584-amino-acid chain: Cytochrome c oxidase subunit 1 (584 aa).

Positions 1–25 (MTAVAPRVDGHVAPQRPEPTGHARK) are disordered. A helical membrane pass occupies residues 43–63 (IMYIIMSFSFFFLGGLMALLI). A Fe(II)-heme a-binding site is contributed by His87. A run of 6 helical transmembrane segments spans residues 90–110 (VMLL…VLPL), 122–142 (LNAF…TGFL), 171–191 (MWIV…INML), 214–234 (IFVV…AALG), 259–279 (LFWF…FGIV), and 292–312 (FGYV…MAVW). Residues His265 and Tyr269 each coordinate Cu cation. A cross-link (1'-histidyl-3'-tyrosine (His-Tyr)) is located at residues 265–269 (HPEVY). Residues His314 and His315 each contribute to the Cu cation site. 2 helical membrane passes run 316 to 336 (MFVT…LISV) and 360 to 380 (MIWS…GIML). His398 contacts heme a3. Transmembrane regions (helical) follow at residues 399–419 (FHYT…YFWF), 434–454 (IHFW…HWVG), and 477–497 (ISTV…WNVF). A Fe(II)-heme a-binding site is contributed by His400. The disordered stretch occupies residues 564–584 (HDDINAPELGTAPALASDSSR).

In terms of assembly, associates with subunits II, III and IV to form cytochrome c oxidase. The 4 subunit cytochrome c oxidase forms a supercomplex with the menaquinol-cytochrome c reductase complex (cytochrome bc1). It depends on Cu(2+) as a cofactor. Requires heme as cofactor.

It is found in the cell membrane. The catalysed reaction is 4 Fe(II)-[cytochrome c] + O2 + 8 H(+)(in) = 4 Fe(III)-[cytochrome c] + 2 H2O + 4 H(+)(out). The protein operates within energy metabolism; oxidative phosphorylation. Functionally, cytochrome c oxidase is the component of the respiratory chain that catalyzes the reduction of oxygen to water. Subunits 1-3 form the functional core of the enzyme complex. CO I is the catalytic subunit of the enzyme. Electrons originating in cytochrome c are transferred via the copper A center of subunit 2 and heme A of subunit 1 to the bimetallic center formed by heme A3 and copper B. The polypeptide is Cytochrome c oxidase subunit 1 (ctaD) (Corynebacterium glutamicum (strain ATCC 13032 / DSM 20300 / JCM 1318 / BCRC 11384 / CCUG 27702 / LMG 3730 / NBRC 12168 / NCIMB 10025 / NRRL B-2784 / 534)).